Reading from the N-terminus, the 195-residue chain is MRNAEVSRNTLETKIAVAINLDGTGVSKLNSGVGFFDHMLDQIARHGMMDISVECQGDLHIDAHHTVEDVGIALGQAFSRALGDKKGIRRYAHAYVPLDEALSRVVLDISGRPGLEFNVEFTRARIGEFDVDLVREFFQGFVNHAALTLHVDNLRGKNAHHQAETIFKAFGRALRAAVELDPRMVGIMPSTKGSL.

This sequence belongs to the imidazoleglycerol-phosphate dehydratase family.

It localises to the cytoplasm. It carries out the reaction D-erythro-1-(imidazol-4-yl)glycerol 3-phosphate = 3-(imidazol-4-yl)-2-oxopropyl phosphate + H2O. The protein operates within amino-acid biosynthesis; L-histidine biosynthesis; L-histidine from 5-phospho-alpha-D-ribose 1-diphosphate: step 6/9. The protein is Imidazoleglycerol-phosphate dehydratase of Aminomonas aminovorus.